Here is a 578-residue protein sequence, read N- to C-terminus: Lysine--tRNA ligase (578 aa).

Residues Glu-414 and Glu-421 each coordinate Mg(2+).

This sequence belongs to the class-II aminoacyl-tRNA synthetase family. In terms of assembly, homodimer. Requires Mg(2+) as cofactor.

It localises to the cytoplasm. The catalysed reaction is tRNA(Lys) + L-lysine + ATP = L-lysyl-tRNA(Lys) + AMP + diphosphate. The sequence is that of Lysine--tRNA ligase from Porphyromonas gingivalis (strain ATCC 33277 / DSM 20709 / CIP 103683 / JCM 12257 / NCTC 11834 / 2561).